Reading from the N-terminus, the 217-residue chain is 3,4-dihydroxy-2-butanone 4-phosphate synthase (217 aa).

Residues 37 to 38, aspartate 42, 150 to 154, and glutamate 174 each bind D-ribulose 5-phosphate; these read RE and RRGHT. Mg(2+) is bound at residue glutamate 38. Histidine 153 provides a ligand contact to Mg(2+).

Belongs to the DHBP synthase family. Homodimer. Requires Mg(2+) as cofactor. Mn(2+) serves as cofactor.

The catalysed reaction is D-ribulose 5-phosphate = (2S)-2-hydroxy-3-oxobutyl phosphate + formate + H(+). Its pathway is cofactor biosynthesis; riboflavin biosynthesis; 2-hydroxy-3-oxobutyl phosphate from D-ribulose 5-phosphate: step 1/1. Catalyzes the conversion of D-ribulose 5-phosphate to formate and 3,4-dihydroxy-2-butanone 4-phosphate. This is 3,4-dihydroxy-2-butanone 4-phosphate synthase from Shewanella woodyi (strain ATCC 51908 / MS32).